We begin with the raw amino-acid sequence, 133 residues long: DUF35 domain-containing scaffold protein (133 aa).

4 residues coordinate Zn(2+): cysteine 23, cysteine 26, cysteine 37, and cysteine 40.

This sequence belongs to the scaffold protein DUF35 family. Interacts with acetoacetyl-CoA thiolase and HMG-CoA synthase (HMGCS) that catalyzes the first and second step in the mevalonate pathway, respectively.

Functions as a scaffold to connect the acetoacetyl-CoA thiolase and HMG-CoA synthase (HMGCS) dimers in the channeling thiolase/HMGCS complex, which allows for efficient coupling of the endergonic thiolase reaction with the exergonic HMGCS reaction. The polypeptide is DUF35 domain-containing scaffold protein (Methanothermobacter thermautotrophicus (strain ATCC 29096 / DSM 1053 / JCM 10044 / NBRC 100330 / Delta H) (Methanobacterium thermoautotrophicum)).